The primary structure comprises 684 residues: Hydroxyproline O-galactosyltransferase GALT2 (684 aa).

Topologically, residues 1-22 (MKRVKSESFRGVYSSRRFKLSH) are cytoplasmic. A helical; Signal-anchor for type II membrane protein membrane pass occupies residues 23–43 (FLLAIAGFYLVFLAFKFPHFI). At 44 to 684 (EMVAMLSGDT…KGRPQCCNFR (641 aa)) the chain is on the lumenal side. The interval 80-102 (KLEDEDHQSGPSTTQKVSPEEKI) is disordered. Residues Asn-103, Asn-127, and Asn-162 are each glycosylated (N-linked (GlcNAc...) asparagine). The Galectin domain occupies 191–405 (RIMLLPCGLA…DVDIHSIHAT (215 aa)). N-linked (GlcNAc...) asparagine glycans are attached at residues Asn-524 and Asn-632.

This sequence belongs to the glycosyltransferase 31 family. Mn(2+) serves as cofactor. As to expression, expressed in stems and at lower levels in cauline leaves and siliques.

Its subcellular location is the golgi apparatus membrane. The protein operates within protein modification; protein glycosylation. Functionally, possesses hydroxyproline O-galactosyltransferase activity. Transfers galactose from UDP-galactose to hydroxyproline residues in the arabinogalactan proteins (AGPs). Is specific for AGPs containing non-contiguous peptidyl hydroxyproline residues. Utilizes UDP-galactose solely as sugar donor. The addition of galactose onto the peptidyl hydroxyproline residues in AGP core proteins represents the first committed step in arabinogalactan polysaccharide addition. AGP glycans play essential roles in both vegetative and reproductive plant growth. The chain is Hydroxyproline O-galactosyltransferase GALT2 from Arabidopsis thaliana (Mouse-ear cress).